Reading from the N-terminus, the 492-residue chain is Virion host shutoff protein (492 aa).

3 disordered regions span residues 110-130 (EEAS…SRPS), 288-307 (SQAR…LESM), and 334-371 (EDDY…ELVQ).

Belongs to the herpesviridae VHS protein family. Interacts with human EIF4H, EIF4A1 and EIF4A2; interaction with eIF4AI and EIF4A2 presumably allows Vhs protein to associate with the eIF4F cap-binding complex.

It is found in the virion. Minor structural protein that acts as an endoribonuclease during lytic infection. Degrades host mRNAs in the cytoplasm by cutting them at preferred sites, including some in regions of translation initiation. Together with inhibition of host splicing by ICP27, contributes to an overall decrease in host protein synthesis. Also, after the onset of viral transcription, accelerates the turnover of viral mRNA, thereby facilitating the sequential expression of different classes of viral genes. Binds translation initiation factors eIF4H, eIF4AI, and eIF4AII, thereby may interact directly with the translation initiation complex and thus digest specifically mRNAs. Also impedes antigen presentation by major histocompatibility complex class I and class II molecules, inhibits secretion of cytokines that would otherwise recruit lymphocytes and neutrophils cells to the site of infection and blocks the activation of dendritic cells. Impedes the alpha/beta interferon-mediated response to infection. Inhibits the integrated stress response (ISR) in the infected cell, this function requires the endonuclease activity. Stress granule formation is thus inhibited, which allows protein synthesis and viral replication. This chain is Virion host shutoff protein (UL41), found in Homo sapiens (Human).